The primary structure comprises 410 residues: Glycylpeptide N-tetradecanoyltransferase (410 aa).

The tetradecanoyl-CoA site is built by phenylalanine 30, tryptophan 31, phenylalanine 162, leucine 163, cysteine 164, valine 165, serine 171, arginine 173, leucine 174, and alanine 175.

Belongs to the NMT family. As to quaternary structure, heterodimer composed of NMT and AK2; AK2 myristoylation stabilizes the complex.

Its subcellular location is the cytoplasm. The enzyme catalyses N-terminal glycyl-[protein] + tetradecanoyl-CoA = N-tetradecanoylglycyl-[protein] + CoA + H(+). Adds a myristoyl group to the N-terminal glycine residue of certain cellular proteins. Myristoylates adenylate kinase AK2. During the asexual blood stage, may myristoylate proteins such as ARO, CDPK1 and GAP45. Probably by mediating protein myristoylation, plays a role in the assembly of the inner membrane complex during the early stages of schizogony and in the formation of rhoptries in the late stages and thus merozoite egress. In Plasmodium falciparum (isolate 3D7), this protein is Glycylpeptide N-tetradecanoyltransferase.